Consider the following 91-residue polypeptide: Small ribosomal subunit protein uS19 (91 aa).

This sequence belongs to the universal ribosomal protein uS19 family.

In terms of biological role, protein S19 forms a complex with S13 that binds strongly to the 16S ribosomal RNA. This is Small ribosomal subunit protein uS19 from Neorickettsia sennetsu (strain ATCC VR-367 / Miyayama) (Ehrlichia sennetsu).